A 274-amino-acid chain; its full sequence is MTDVEPSPYGDCKFVARVEHIKTFIQAIKSICFNDYGMVQVSEDGLRITVEQGKSIQATLFMPPGAFMEFRVQDFQCFGVKMNVLSECLSLFGSADCSLRMMYRDKGDPLKIILYPHDDDDVSTECAIKTMDCDEPIDYDQNLKDPDLNVIFVRGPNLSKVFNELEKSAEEFEFVTSPNRPHFKITTVGIMQAVFSVEVAKTSPMMMMFNCKQTVVARYKSQQIRMTNKAMQSATKVAIKTNSVGLLELHLVMQGDSQEEIFIQFFIIPLLNTD.

It belongs to the rad1 family. Component of the 9-1-1 checkpoint clamp complex consisting of Rad9 isoform A, Rad1 and Hus1-like; the interaction with Hus1-like is direct. Does not interact directly with Rad9; this interaction is probably mediated by Hus1-like. This complex probably also forms with Rad9 isoform B, however 9-1-1 complex containing Rad9 isoform A localizes to the nuclear periphery. As to expression, expressed in ovary.

The protein localises to the cytoplasm. Its subcellular location is the nucleus. The protein resides in the nucleus envelope. This chain is DNA repair protein Rad1, found in Drosophila melanogaster (Fruit fly).